The following is a 129-amino-acid chain: Large ribosomal subunit protein bL20 (129 aa).

It belongs to the bacterial ribosomal protein bL20 family.

Its function is as follows. Binds directly to 23S ribosomal RNA and is necessary for the in vitro assembly process of the 50S ribosomal subunit. It is not involved in the protein synthesizing functions of that subunit. The chain is Large ribosomal subunit protein bL20 from Rhodococcus jostii (strain RHA1).